The sequence spans 626 residues: Polypeptide N-acetylgalactosaminyltransferase 5 (626 aa).

At 1–11 (MIIFKKKAILK) the chain is on the cytoplasmic side. A helical; Signal-anchor for type II membrane protein membrane pass occupies residues 12-31 (VLLLVPVFWICSLIFFAATS). A glycan (N-linked (GlcNAc...) asparagine) is linked at Asn32. At 32–626 (NDSSQIGSNN…AIEHGAKPPS (595 aa)) the chain is on the lumenal side. Intrachain disulfides connect Cys165–Cys399, Cys390–Cys466, Cys502–Cys521, Cys544–Cys557, and Cys583–Cys598. The segment at 174–284 (LPRTSVIICF…EGWMEPLLDR (111 aa)) is catalytic subdomain A. The substrate site is built by Asp215 and Arg245. Asp268 lines the Mn(2+) pocket. Ser269 is a binding site for substrate. His270 contacts Mn(2+). Asn338 carries N-linked (GlcNAc...) asparagine glycosylation. Positions 345–407 (PVRSPTMAGG…PCSHVGHVFR (63 aa)) are catalytic subdomain B. A substrate-binding site is contributed by Trp376. Position 404 (His404) interacts with Mn(2+). Residues Arg407 and Tyr412 each coordinate substrate. Positions 488–610 (AKGEVRNSAV…DDPYQHWKFK (123 aa)) constitute a Ricin B-type lectin domain.

The protein belongs to the glycosyltransferase 2 family. GalNAc-T subfamily. Requires Mn(2+) as cofactor.

It localises to the golgi apparatus membrane. The catalysed reaction is L-seryl-[protein] + UDP-N-acetyl-alpha-D-galactosamine = a 3-O-[N-acetyl-alpha-D-galactosaminyl]-L-seryl-[protein] + UDP + H(+). It catalyses the reaction L-threonyl-[protein] + UDP-N-acetyl-alpha-D-galactosamine = a 3-O-[N-acetyl-alpha-D-galactosaminyl]-L-threonyl-[protein] + UDP + H(+). It functions in the pathway protein modification; protein glycosylation. Catalyzes the initial reaction in O-linked oligosaccharide biosynthesis, the transfer of an N-acetyl-D-galactosamine residue to a serine or threonine residue on the protein receptor. The sequence is that of Polypeptide N-acetylgalactosaminyltransferase 5 (gly-5) from Caenorhabditis elegans.